The primary structure comprises 201 residues: Large ribosomal subunit protein uL4 (201 aa).

Residues 44–71 (RAQKTRAEVSGSGKKPWRQKGTGRARSG) form a disordered region.

Belongs to the universal ribosomal protein uL4 family. In terms of assembly, part of the 50S ribosomal subunit.

Functionally, one of the primary rRNA binding proteins, this protein initially binds near the 5'-end of the 23S rRNA. It is important during the early stages of 50S assembly. It makes multiple contacts with different domains of the 23S rRNA in the assembled 50S subunit and ribosome. In terms of biological role, forms part of the polypeptide exit tunnel. This Actinobacillus succinogenes (strain ATCC 55618 / DSM 22257 / CCUG 43843 / 130Z) protein is Large ribosomal subunit protein uL4.